A 239-amino-acid polypeptide reads, in one-letter code: Fatty acid metabolism regulator protein (239 aa).

In terms of domain architecture, HTH gntR-type spans Lys6–Phe74. A DNA-binding region (H-T-H motif) is located at residues Glu34–Gln53.

In terms of assembly, homodimer.

Its subcellular location is the cytoplasm. Its function is as follows. Multifunctional regulator of fatty acid metabolism. This Shewanella frigidimarina (strain NCIMB 400) protein is Fatty acid metabolism regulator protein.